A 425-amino-acid chain; its full sequence is Actin-related protein 3 (425 aa).

It belongs to the actin family. ARP3 subfamily. Component of the Arp2/3 complex, at least composed of arx-1, arx-2, arx-4 and arx-6.

It localises to the cytoplasm. The protein localises to the cytoskeleton. In terms of biological role, functions as ATP-binding component of the Arp2/3 complex which is involved in regulation of actin polymerization and together with an activating nucleation-promoting factor (NPF) mediates the formation of branched actin networks. Seems to contact the pointed end of the daughter actin filament. Plays a role in time-dependent memory loss and the retention of conditioned behavior over time. The sequence is that of Actin-related protein 3 from Caenorhabditis elegans.